Consider the following 99-residue polypeptide: A-type ATP synthase subunit F (99 aa).

It belongs to the V-ATPase F subunit family. In terms of assembly, has multiple subunits with at least A(3), B(3), C, D, E, F, H, I and proteolipid K(x).

The protein resides in the cell membrane. Component of the A-type ATP synthase that produces ATP from ADP in the presence of a proton gradient across the membrane. The chain is A-type ATP synthase subunit F from Methanocella arvoryzae (strain DSM 22066 / NBRC 105507 / MRE50).